Consider the following 54-residue polypeptide: UPF0391 membrane protein R00741 (54 aa).

Transmembrane regions (helical) follow at residues 5–25 (ALVF…GIAG) and 30–50 (IAQV…VAGL).

It belongs to the UPF0391 family.

Its subcellular location is the cell membrane. The sequence is that of UPF0391 membrane protein R00741 from Rhizobium meliloti (strain 1021) (Ensifer meliloti).